Consider the following 202-residue polypeptide: Potassium-transporting ATPase KdpC subunit (202 aa).

The chain crosses the membrane as a helical span at residues 7-27; that stretch reads PAIFVLLALTLITGLLYPLAM. The segment at 66-103 is disordered; sequence FHGRPSATSTADPNDSTKTVPAPYNAANSSGSNLGPTS. 2 stretches are compositionally biased toward polar residues: residues 71 to 84 and 91 to 101; these read SATSTADPNDSTKT and AANSSGSNLGP.

This sequence belongs to the KdpC family. In terms of assembly, the system is composed of three essential subunits: KdpA, KdpB and KdpC.

The protein resides in the cell inner membrane. Functionally, part of the high-affinity ATP-driven potassium transport (or Kdp) system, which catalyzes the hydrolysis of ATP coupled with the electrogenic transport of potassium into the cytoplasm. This subunit acts as a catalytic chaperone that increases the ATP-binding affinity of the ATP-hydrolyzing subunit KdpB by the formation of a transient KdpB/KdpC/ATP ternary complex. The protein is Potassium-transporting ATPase KdpC subunit of Bradyrhizobium sp. (strain ORS 278).